We begin with the raw amino-acid sequence, 814 residues long: Testis-specific zinc finger protein topi (814 aa).

C2H2-type zinc fingers lie at residues 228 to 250 (NECTMCDRKFVHASGLVRHMEKH), 275 to 297 (VKCNSCGRIFYDPQVAFRHGLIH), 360 to 382 (LQCEFCEYIFADIAELLVHSASH), 429 to 453 (FVCNVCELKFANTDLLQEHRCTSFH), 467 to 490 (LPCDFCDVNFEFAHDFLAHSEEKH), 511 to 533 (YLCDICGKSYTQSSHLWQHLRFH), 539 to 564 (FVCQEENCDRKFTIRPDLNDHIRKCH), 570 to 592 (YLCLVCGKRFLTGSVFYQHRLIH), 598 to 620 (YECEECGKRFYRADALKNHQRIH), and 626 to 649 (YSCLFCTKTFRQRGDRDKHIRARH). The interval 669–705 (TAAAQKAQSHNPEQQDNDVAGGASTSDVPSGSGFMST) is disordered. Polar residues predominate over residues 691–705 (ASTSDVPSGSGFMST).

As to quaternary structure, interacts with comr. As to expression, expressed in testis; primary spermatocytes.

The protein resides in the nucleus. Functionally, required for male meiotic division and spermatid differentiation. Required for accumulation of aly and comr on chromatin. May function as a transcription factor. The protein is Testis-specific zinc finger protein topi (topi) of Drosophila melanogaster (Fruit fly).